Consider the following 133-residue polypeptide: TETPVTGEQGSATPGNVSNATVTAGKPSATSPGVMTIKNTTAVVQKETGVPESYHQDFSHAEITGIIFAVMAGLLLIIFLIAYLIRRMIKKPLPVPKPQDSPDIGTENTADPSELQDTEDPPLTSVEIETPAS.

O-linked (GalNAc...) threonine glycans are attached at residues T1 and T6. The interval 1-34 (TETPVTGEQGSATPGNVSNATVTAGKPSATSPGV) is disordered. Topologically, residues 1 to 62 (TETPVTGEQG…SYHQDFSHAE (62 aa)) are extracellular. A glycan (O-linked (GalNAc...) serine) is linked at S11. An O-linked (GalNAc...) threonine glycan is attached at T13. A glycan (N-linked (GlcNAc...) asparagine) is linked at N19. O-linked (GalNAc...) threonine glycans are attached at residues T21, T23, and T30. S31 carries an O-linked (GalNAc...) serine glycan. The N-linked (GlcNAc...) asparagine glycan is linked to N39. T41 and T48 each carry an O-linked (GalNAc...) threonine glycan. A helical transmembrane segment spans residues 63–85 (ITGIIFAVMAGLLLIIFLIAYLI). The Cytoplasmic portion of the chain corresponds to 86-133 (RRMIKKPLPVPKPQDSPDIGTENTADPSELQDTEDPPLTSVEIETPAS). The disordered stretch occupies residues 93–133 (LPVPKPQDSPDIGTENTADPSELQDTEDPPLTSVEIETPAS).

Belongs to the glycophorin-A family. In terms of assembly, homodimer. Component of the ankyrin-1 complex in the erythrocyte, composed of ANK1, RHCE, RHAG, SLC4A1, EPB42, GYPA, GYPB and AQP1. Interacts with SLC4A1; a GYPA monomer is bound at each end of the SLC4A1 dimer forming a heterotetramer.

It is found in the membrane. Functionally, component of the ankyrin-1 complex, a multiprotein complex involved in the stability and shape of the erythrocyte membrane. Glycophorin A is the major intrinsic membrane protein of the erythrocyte. The N-terminal glycosylated segment, which lies outside the erythrocyte membrane, has MN blood group receptors. Appears to be important for the function of SLC4A1 and is required for high activity of SLC4A1. May be involved in translocation of SLC4A1 to the plasma membrane. The chain is Glycophorin-A from Sus scrofa (Pig).